Consider the following 270-residue polypeptide: F-actin-capping protein subunit beta (270 aa).

It belongs to the F-actin-capping protein beta subunit family. In terms of assembly, component of the F-actin capping complex, composed of a heterodimer of an alpha and a beta subunit.

It is found in the cytoplasm. The protein resides in the cytoskeleton. Functionally, F-actin-capping proteins bind in a Ca(2+)-independent manner to the fast growing ends of actin filaments (barbed end) thereby blocking the exchange of subunits at these ends. Unlike other capping proteins (such as gelsolin and severin), these proteins do not sever actin filaments. This is F-actin-capping protein subunit beta (cap-2) from Caenorhabditis elegans.